The primary structure comprises 340 residues: NADPH dehydrogenase (340 aa).

23 to 26 (SPMC) is an FMN binding site. Residue tyrosine 28 participates in substrate binding. FMN-binding residues include alanine 60 and glutamine 102. 164-167 (HAAH) contacts substrate. Residues arginine 215 and 307 to 308 (GR) each bind FMN.

The protein belongs to the NADH:flavin oxidoreductase/NADH oxidase family. NamA subfamily. As to quaternary structure, homotetramer. FMN is required as a cofactor.

It catalyses the reaction A + NADPH + H(+) = AH2 + NADP(+). Catalyzes the reduction of the double bond of an array of alpha,beta-unsaturated aldehydes and ketones. It also reduces the nitro group of nitroester and nitroaromatic compounds. It could have a role in detoxification processes. The sequence is that of NADPH dehydrogenase from Geobacillus thermodenitrificans (strain NG80-2).